A 367-amino-acid polypeptide reads, in one-letter code: Biotin synthase (367 aa).

The region spanning 67-291 (NAVQISTLLS…IAVTRICCPS (225 aa)) is the Radical SAM core domain. Cys82, Cys86, and Cys89 together coordinate [4Fe-4S] cluster. The [2Fe-2S] cluster site is built by Cys128, Cys159, Cys219, and Arg295.

This sequence belongs to the radical SAM superfamily. Biotin synthase family. As to quaternary structure, homodimer. It depends on [4Fe-4S] cluster as a cofactor. [2Fe-2S] cluster is required as a cofactor.

The enzyme catalyses (4R,5S)-dethiobiotin + (sulfur carrier)-SH + 2 reduced [2Fe-2S]-[ferredoxin] + 2 S-adenosyl-L-methionine = (sulfur carrier)-H + biotin + 2 5'-deoxyadenosine + 2 L-methionine + 2 oxidized [2Fe-2S]-[ferredoxin]. The protein operates within cofactor biosynthesis; biotin biosynthesis; biotin from 7,8-diaminononanoate: step 2/2. Functionally, catalyzes the conversion of dethiobiotin (DTB) to biotin by the insertion of a sulfur atom into dethiobiotin via a radical-based mechanism. In Psychrobacter sp. (strain PRwf-1), this protein is Biotin synthase.